Here is an 84-residue protein sequence, read N- to C-terminus: CDC42 small effector protein 2-A (84 aa).

S-palmitoyl cysteine attachment occurs at residues Cys10 and Cys11. The 14-residue stretch at 29–42 folds into the CRIB domain; it reads IGEPTNFVHTAHVG.

It belongs to the CDC42SE/SPEC family.

The protein localises to the cytoplasm. It localises to the cytoskeleton. Its subcellular location is the cell membrane. Its function is as follows. Probably involved in the organization of the actin cytoskeleton by acting downstream of CDC42, inducing actin filament assembly. The sequence is that of CDC42 small effector protein 2-A (cdc42se2-a) from Xenopus laevis (African clawed frog).